The following is a 527-amino-acid chain: Cytokinin dehydrogenase 3 (527 aa).

Residues 1-22 (MEVAMVCTRVNLLILILSLCSP) form the signal peptide. Residues 52–231 (LFHSPSAVLK…TRARILLQEA (180 aa)) form the FAD-binding PCMH-type domain. Residues alanine 87, glycine 89, and glycine 91 each coordinate FAD. Position 92 is a pros-8alpha-FAD histidine (histidine 92). FAD is bound by residues serine 93, glutamine 97, aspartate 155, threonine 160, serine 166, isoleucine 170, and isoleucine 221. Asparagine 413 carries an N-linked (GlcNAc...) asparagine glycan. 2 residues coordinate FAD: tyrosine 471 and glutamine 509.

The protein belongs to the oxygen-dependent FAD-linked oxidoreductase family. In terms of assembly, monomer. FAD serves as cofactor. Expressed in inflorescence meristems. Highly expressed in lamina joints, and mainly in the parenchyma cells and vascular bundles on the abaxial side of the lamina joint. Expressed in roots, stems, leaves and young panicles.

It localises to the endoplasmic reticulum. It catalyses the reaction N(6)-dimethylallyladenine + A + H2O = 3-methyl-2-butenal + adenine + AH2. Functionally, catalyzes the oxidation of cytokinins, a family of N(6)-substituted adenine derivatives, where the substituent is an isopentenyl group. Cytokinins are plant hormones essential for plant growth, development, and stress responses. Exhibits specific activities toward trans-zeatin (tZ) and isopentenyladenine (iP). Plays a role in lamina joint inclination. Regulates cell proliferation and vascular bundle number on the abaxial side of lamina joint. This chain is Cytokinin dehydrogenase 3, found in Oryza sativa subsp. japonica (Rice).